The following is a 118-amino-acid chain: Ribonuclease P protein component (118 aa).

It belongs to the RnpA family. In terms of assembly, consists of a catalytic RNA component (M1 or rnpB) and a protein subunit.

The catalysed reaction is Endonucleolytic cleavage of RNA, removing 5'-extranucleotides from tRNA precursor.. Functionally, RNaseP catalyzes the removal of the 5'-leader sequence from pre-tRNA to produce the mature 5'-terminus. It can also cleave other RNA substrates such as 4.5S RNA. The protein component plays an auxiliary but essential role in vivo by binding to the 5'-leader sequence and broadening the substrate specificity of the ribozyme. The protein is Ribonuclease P protein component of Vibrio vulnificus (strain CMCP6).